The primary structure comprises 429 residues: D-galactonate dehydratase family member Caci_4410 (429 aa).

Residues 1–22 form a disordered region; the sequence is MTDANHLLDPSGALPQTRPPWT. Asp-233 contributes to the Mg(2+) binding site. His-235 lines the D-arabinonate pocket. The Mg(2+) site is built by Glu-259 and Glu-285. 4 residues coordinate D-arabinonate: Glu-285, Arg-306, His-335, and Glu-362.

It belongs to the mandelate racemase/muconate lactonizing enzyme family. GalD subfamily.

In terms of biological role, has no detectable activity with D-mannonate and with a panel of 70 other acid sugars (in vitro), in spite of the conservation of the residues that are expected to be important for catalytic activity and cofactor binding. May have evolved a divergent function. This chain is D-galactonate dehydratase family member Caci_4410, found in Catenulispora acidiphila (strain DSM 44928 / JCM 14897 / NBRC 102108 / NRRL B-24433 / ID139908).